The chain runs to 493 residues: Proline--tRNA ligase (493 aa).

The protein belongs to the class-II aminoacyl-tRNA synthetase family. ProS type 3 subfamily. As to quaternary structure, homodimer.

Its subcellular location is the cytoplasm. It carries out the reaction tRNA(Pro) + L-proline + ATP = L-prolyl-tRNA(Pro) + AMP + diphosphate. Catalyzes the attachment of proline to tRNA(Pro) in a two-step reaction: proline is first activated by ATP to form Pro-AMP and then transferred to the acceptor end of tRNA(Pro). In Porphyromonas gingivalis (strain ATCC 33277 / DSM 20709 / CIP 103683 / JCM 12257 / NCTC 11834 / 2561), this protein is Proline--tRNA ligase.